A 336-amino-acid chain; its full sequence is uncharacterized protein (336 aa).

Positions 297 to 316 are enriched in basic and acidic residues; that stretch reads KKDLQKSEEEEHPNDDHVYM. The segment at 297 to 336 is disordered; the sequence is KKDLQKSEEEEHPNDDHVYMTEEDDMEKIERGIESLGNGH.

This is an uncharacterized protein from Invertebrate iridescent virus 6 (IIV-6).